Reading from the N-terminus, the 1383-residue chain is PAS domain-containing serine/threonine-protein kinase (1383 aa).

Methionine 1 is modified (N-acetylmethionine). Serine 19 bears the Phosphoserine mark. A Phosphothreonine modification is found at threonine 31. PAS domains are found at residues 117 to 188 (SGSL…VEAD) and 333 to 400 (YQAS…SVQL). The residue at position 1000 (serine 1000) is a Phosphoserine. The region spanning 1059-1311 (YNTISPLGSG…LEKLIRDPWV (253 aa)) is the Protein kinase domain. Residues 1065 to 1073 (LGSGAFGFV), lysine 1088, and 1142 to 1149 (EKHGSGMD) each bind ATP. Residue aspartate 1188 is the Proton acceptor of the active site. Position 1206 (aspartate 1206) interacts with ATP. 2 positions are modified to phosphothreonine; by autocatalysis: threonine 1221 and threonine 1225. The tract at residues 1344–1383 (GSRSPSEMAQREGLCGPPAPRETRGDQHCLHLKDPSLPVS) is disordered. Residues 1364–1377 (RETRGDQHCLHLKD) show a composition bias toward basic and acidic residues.

It belongs to the protein kinase superfamily. CAMK Ser/Thr protein kinase family. Post-translationally, autophosphorylated on Thr-1221 and Thr-1225. Autophosphorylation is activated by phospholipids. As to expression, ubiquitously expressed. Strongly up-regulated in postmeiotic germ cells during spermatogenesis.

The protein resides in the cytoplasm. It is found in the nucleus. It catalyses the reaction L-seryl-[protein] + ATP = O-phospho-L-seryl-[protein] + ADP + H(+). The catalysed reaction is L-threonyl-[protein] + ATP = O-phospho-L-threonyl-[protein] + ADP + H(+). With respect to regulation, protein kinase activity is inhibited by the first PAS domain: binding of an unidentified ligand desinhibits the protein kinase activity. May be activated by autophosphorylation on Thr-1221 and Thr-1225. Autophosphorylation is enhanced upon phosphatidylinositol monophosphate (phosphatidylinositol 4-phosphate) binding and inhibited upon phosphatidylinositol bi- and tri-phosphate binding. In contrast, phosphorylation of target proteins is inhibited upon all phosphatidylinositol-binding (phosphatidylinositol mono- bi- and tri-phosphate). Functionally, serine/threonine-protein kinase involved in energy homeostasis and protein translation. Phosphorylates EEF1A1, GYS1, PDX1 and RPS6. Probably plays a role under changing environmental conditions (oxygen, glucose, nutrition), rather than under standard conditions. Acts as a sensor involved in energy homeostasis: regulates glycogen synthase synthesis by mediating phosphorylation of GYS1, leading to GYS1 inactivation. May be involved in glucose-stimulated insulin production in pancreas and regulation of glucagon secretion by glucose in alpha cells; however such data require additional evidences. May play a role in regulation of protein translation by phosphorylating EEF1A1, leading to increase translation efficiency. May also participate in respiratory regulation. The protein is PAS domain-containing serine/threonine-protein kinase (Pask) of Mus musculus (Mouse).